Consider the following 120-residue polypeptide: uncharacterized protein (120 aa).

Residues 63–83 (IDMSCVICFNFSCHLFVVIFI) form a helical membrane-spanning segment.

It is found in the membrane. This is an uncharacterized protein from Saccharomyces cerevisiae (strain ATCC 204508 / S288c) (Baker's yeast).